The chain runs to 98 residues: Acylphosphatase (98 aa).

The Acylphosphatase-like domain occupies 12–98 (TYYVRVRGVV…EKRFERFQQQ (87 aa)). Active-site residues include arginine 27 and asparagine 45.

Belongs to the acylphosphatase family.

It catalyses the reaction an acyl phosphate + H2O = a carboxylate + phosphate + H(+). The chain is Acylphosphatase (acyP) from Burkholderia cenocepacia (strain HI2424).